The following is a 1148-amino-acid chain: Maintenance of telomere capping protein 5 (1148 aa).

5 WD repeats span residues 63–106 (HHIT…SNAI), 112–152 (GHSR…RPFY), 156–195 (SWRSAASQVKWNYKDPNVLASSHGNDIFVWDLRKGSTPLC), 199–239 (GHVS…TESK), and 299–348 (GHSD…YGKV). Positions 432 to 543 (EEVSAIGHKF…RFVLGEKVSL (112 aa)) constitute an RWD domain. The residue at position 759 (Ser-759) is a Phosphoserine. The tract at residues 963-990 (THNTLNGSSKFTEPAQKQGSRAISSSPF) is disordered. A compositionally biased stretch (polar residues) spans 964 to 990 (HNTLNGSSKFTEPAQKQGSRAISSSPF).

It belongs to the WD repeat WDR59 family. As to quaternary structure, component of the SEA complex composed of at least IML1/SEA1, RTC1/SEA2, MTC5/SEA3, NPR2, NPR3, SEA4, SEC13 and SEH1.

The protein localises to the vacuole membrane. In terms of biological role, component of the SEA complex which coats the vacuolar membrane and is involved in intracellular trafficking, autophagy, response to nitrogen starvation, and amino acid biogenesis. May be involved in telomere capping. This chain is Maintenance of telomere capping protein 5 (MTC5), found in Saccharomyces cerevisiae (strain ATCC 204508 / S288c) (Baker's yeast).